An 80-amino-acid chain; its full sequence is Putative membrane protein insertion efficiency factor (80 aa).

The segment at 61 to 80 (KTGKDPVPDHFSLKRNQEGE) is disordered. Residues 62–80 (TGKDPVPDHFSLKRNQEGE) show a composition bias toward basic and acidic residues.

Belongs to the UPF0161 family.

It is found in the cell membrane. In terms of biological role, could be involved in insertion of integral membrane proteins into the membrane. In Streptococcus pneumoniae serotype 19F (strain G54), this protein is Putative membrane protein insertion efficiency factor.